The following is a 490-amino-acid chain: Cytochrome P450 2C55 (490 aa).

Cys-435 provides a ligand contact to heme.

This sequence belongs to the cytochrome P450 family. It depends on heme as a cofactor. Highest level in colon. Low levels in liver and small intestine.

It localises to the endoplasmic reticulum membrane. The protein resides in the microsome membrane. It carries out the reaction an organic molecule + reduced [NADPH--hemoprotein reductase] + O2 = an alcohol + oxidized [NADPH--hemoprotein reductase] + H2O + H(+). Metabolizes arachidonic acid mainly to 19-hydroxyeicosatetraenoic acid (HETE). This is Cytochrome P450 2C55 from Mus musculus (Mouse).